A 771-amino-acid polypeptide reads, in one-letter code: Carnitine O-palmitoyltransferase 1, muscle isoform (771 aa).

The Cytoplasmic segment spans residues 1–47 (MAEAHQAVAFQFTVTPEGVDFQLSREVLKHIYLSVIRSWKKRLIRIK). Residues 48–73 (NGILRGVYPGSPTSWLVVVMATAGSS) traverse the membrane as a helical segment. The Mitochondrial intermembrane segment spans residues 74–101 (YYNVDISMGLVYYIQRWLPEGRPYRTPY). A helical transmembrane segment spans residues 102–121 (TRTLFSMAIFSTGVWMMGIF). The Cytoplasmic segment spans residues 122–771 (FFRQTLKLLL…NLFQVPKADG (650 aa)). The Proton acceptor role is filled by His472. 554–566 (GKGLIKKCRTSPD) contacts CoA. The (R)-carnitine site is built by Tyr588 and Thr601.

It belongs to the carnitine/choline acetyltransferase family.

It localises to the mitochondrion outer membrane. It carries out the reaction (R)-carnitine + hexadecanoyl-CoA = O-hexadecanoyl-(R)-carnitine + CoA. The protein operates within lipid metabolism; fatty acid beta-oxidation. Its function is as follows. Catalyzes the transfer of the acyl group of long-chain fatty acid-CoA conjugates onto carnitine, an essential step for the mitochondrial uptake of long-chain fatty acids and their subsequent beta-oxidation in the mitochondrion. The sequence is that of Carnitine O-palmitoyltransferase 1, muscle isoform (CPT1B) from Bos taurus (Bovine).